The chain runs to 1595 residues: Pentafunctional AROM polypeptide (1595 aa).

Residues 1–384 (MGVPTKISIL…HEPRASTVSN (384 aa)) are 3-dehydroquinate synthase. Residues 44 to 46 (DTN), 81 to 84 (ESSK), 114 to 116 (GGV), and aspartate 119 contribute to the NAD(+) site. Arginine 130 contacts 7-phospho-2-dehydro-3-deoxy-D-arabino-heptonate. 139–140 (TT) is an NAD(+) binding site. 2 residues coordinate 7-phospho-2-dehydro-3-deoxy-D-arabino-heptonate: aspartate 146 and lysine 152. Lysine 161 contributes to the NAD(+) binding site. Residue asparagine 162 participates in 7-phospho-2-dehydro-3-deoxy-D-arabino-heptonate binding. NAD(+)-binding positions include 179–182 (FLNT) and asparagine 190. Residue glutamate 194 coordinates Zn(2+). 7-phospho-2-dehydro-3-deoxy-D-arabino-heptonate contacts are provided by residues 194–197 (EVIK) and lysine 250. Glutamate 260 (proton acceptor; for 3-dehydroquinate synthase activity) is an active-site residue. 7-phospho-2-dehydro-3-deoxy-D-arabino-heptonate is bound by residues 264 to 268 (RNLLN) and histidine 271. Residue histidine 271 coordinates Zn(2+). The Proton acceptor; for 3-dehydroquinate synthase activity role is filled by histidine 275. 7-phospho-2-dehydro-3-deoxy-D-arabino-heptonate-binding residues include histidine 287 and lysine 356. Histidine 287 provides a ligand contact to Zn(2+). Positions 397-842 (VSPGVPKGLD…WDSLAQTFKV (446 aa)) are EPSP synthase. Cysteine 824 acts as the For EPSP synthase activity in catalysis. A shikimate kinase region spans residues 866–1057 (ASIFIIGMRG…RRKENTFFVS (192 aa)). 872 to 879 (GMRGAGKT) is a binding site for ATP. Residues 1058 to 1278 (LTLPDLGLAA…AAPGQLSARE (221 aa)) are 3-dehydroquinase. Histidine 1181 serves as the catalytic Proton acceptor; for 3-dehydroquinate dehydratase activity. Lysine 1209 acts as the Schiff-base intermediate with substrate; for 3-dehydroquinate dehydratase activity in catalysis. The shikimate dehydrogenase stretch occupies residues 1291–1595 (AKKFAVIGNP…MGVLPSEDIS (305 aa)).

In the N-terminal section; belongs to the sugar phosphate cyclases superfamily. Dehydroquinate synthase family. This sequence in the 2nd section; belongs to the EPSP synthase family. It in the 3rd section; belongs to the shikimate kinase family. The protein in the 4th section; belongs to the type-I 3-dehydroquinase family. In the C-terminal section; belongs to the shikimate dehydrogenase family. In terms of assembly, homodimer. Requires Zn(2+) as cofactor.

It is found in the cytoplasm. It catalyses the reaction 7-phospho-2-dehydro-3-deoxy-D-arabino-heptonate = 3-dehydroquinate + phosphate. The enzyme catalyses 3-dehydroquinate = 3-dehydroshikimate + H2O. The catalysed reaction is shikimate + NADP(+) = 3-dehydroshikimate + NADPH + H(+). It carries out the reaction shikimate + ATP = 3-phosphoshikimate + ADP + H(+). It catalyses the reaction 3-phosphoshikimate + phosphoenolpyruvate = 5-O-(1-carboxyvinyl)-3-phosphoshikimate + phosphate. Its pathway is metabolic intermediate biosynthesis; chorismate biosynthesis; chorismate from D-erythrose 4-phosphate and phosphoenolpyruvate: step 2/7. It functions in the pathway metabolic intermediate biosynthesis; chorismate biosynthesis; chorismate from D-erythrose 4-phosphate and phosphoenolpyruvate: step 3/7. The protein operates within metabolic intermediate biosynthesis; chorismate biosynthesis; chorismate from D-erythrose 4-phosphate and phosphoenolpyruvate: step 4/7. It participates in metabolic intermediate biosynthesis; chorismate biosynthesis; chorismate from D-erythrose 4-phosphate and phosphoenolpyruvate: step 5/7. Its pathway is metabolic intermediate biosynthesis; chorismate biosynthesis; chorismate from D-erythrose 4-phosphate and phosphoenolpyruvate: step 6/7. Functionally, the AROM polypeptide catalyzes 5 consecutive enzymatic reactions in prechorismate polyaromatic amino acid biosynthesis. The protein is Pentafunctional AROM polypeptide of Ajellomyces capsulatus (strain H143) (Darling's disease fungus).